We begin with the raw amino-acid sequence, 85 residues long: Toxin TdNa9 (85 aa).

A signal peptide spans 1-21 (MLKFAIAVALLLFIGLELREA). One can recognise an LCN-type CS-alpha/beta domain in the interval 22-84 (RDGYPQSKVN…YGDPGTKPCM (63 aa)). Cystine bridges form between cysteine 33-cysteine 83, cysteine 37-cysteine 58, cysteine 43-cysteine 63, and cysteine 47-cysteine 65.

Belongs to the long (4 C-C) scorpion toxin superfamily. Sodium channel inhibitor family. Beta subfamily. As to expression, expressed by the venom gland.

The protein resides in the secreted. Its function is as follows. Alpha toxins bind voltage-independently at site-3 of sodium channels (Nav) and inhibit the inactivation of the activated channels, thereby blocking neuronal transmission. This toxin binds, in vitro, to sodium channels and inhibits the inactivation of the activated channels. Seems not toxic to mice, crickets and sweet-water shrimps. The protein is Toxin TdNa9 of Tityus discrepans (Venezuelan scorpion).